The sequence spans 54 residues: Lectin alpha chain (54 aa).

This sequence belongs to the leguminous lectin family. As to quaternary structure, tetramer of two alpha and two beta chains.

The chain is Lectin alpha chain from Lathyrus odoratus (Sweet pea).